Here is a 220-residue protein sequence, read N- to C-terminus: MEMEHINENTIRVLIGNEDLADRGITFLDLLGNHKDVENFFYSILEEVDVEDEFQGSEAVTFQVLPKNDGLELFISKNVAMDDLSSLEGLSEVNADVSELIRKQIEADKAAADELDEMEATDETNRNVIFELDNFEAMIQLSKEVFMQSVLTNLYTYNDRYYLQVLFLTDELEKTNVDNEIAQILEFAHKTTVTQDTLVEYGTCIMERSALELTRYYFND.

It belongs to the MecA family. In terms of assembly, homodimer.

Functionally, enables the recognition and targeting of unfolded and aggregated proteins to the ClpC protease or to other proteins involved in proteolysis. This chain is Adapter protein MecA, found in Enterococcus faecalis (strain ATCC 700802 / V583).